The sequence spans 258 residues: MYPECGVETKSRPCSKQLQEEVSYPEWISRSYVELMSLNEHSMQALSWRKLYLSRAKLKASSRTSALLSGFAMVAMVEVQLEPNHAYPPGLLIAFSACTTVLVAVHLFALMVSTCILPNIEAVSNVHNLNSVKESPHERMHHHIELAWAFSTVIGTLLFLAEVVLLCWVKFLPVNSPKISSNETSAVSSGQAAAITSTAIMVPFGLVFIVFAVHFYRSLVSHKTDRQFQELNELAELAQLQDQLDHRGDPVQSPVHYA.

The Cytoplasmic segment spans residues 1-63 (MYPECGVETK…SRAKLKASSR (63 aa)). The helical transmembrane segment at 64 to 81 (TSALLSGFAMVAMVEVQL) threads the bilayer. The Extracellular portion of the chain corresponds to 82-91 (EPNHAYPPGL). Residues 92 to 112 (LIAFSACTTVLVAVHLFALMV) traverse the membrane as a helical segment. The Cytoplasmic segment spans residues 113 to 145 (STCILPNIEAVSNVHNLNSVKESPHERMHHHIE). Residues 146–166 (LAWAFSTVIGTLLFLAEVVLL) form a helical membrane-spanning segment. Residues 167 to 192 (CWVKFLPVNSPKISSNETSAVSSGQA) are Extracellular-facing. An N-linked (GlcNAc...) asparagine glycan is attached at N182. Residues 193–213 (AAITSTAIMVPFGLVFIVFAV) traverse the membrane as a helical segment. Residues 214 to 258 (HFYRSLVSHKTDRQFQELNELAELAQLQDQLDHRGDPVQSPVHYA) are Cytoplasmic-facing.

It belongs to the Orai family.

The protein localises to the cell membrane. Functionally, ca(2+) release-activated Ca(2+) (CRAC) channel subunit which mediates Ca(2+) influx following depletion of intracellular Ca(2+) stores. The protein is Calcium release-activated calcium channel protein 1 (orai1) of Xenopus laevis (African clawed frog).